Consider the following 548-residue polypeptide: Chaperonin GroEL 2 (548 aa).

ATP is bound by residues 30–33 (TLGP), Lys-51, 87–91 (DGTTT), Gly-415, and Asp-496. Residues 529-548 (KDAMPSPDMGGMGGMGGMGF) form a disordered region. The span at 538–548 (GGMGGMGGMGF) shows a compositional bias: gly residues.

The protein belongs to the chaperonin (HSP60) family. Forms a cylinder of 14 subunits composed of two heptameric rings stacked back-to-back. Interacts with the co-chaperonin GroES.

The protein localises to the cytoplasm. It carries out the reaction ATP + H2O + a folded polypeptide = ADP + phosphate + an unfolded polypeptide.. In terms of biological role, together with its co-chaperonin GroES, plays an essential role in assisting protein folding. The GroEL-GroES system forms a nano-cage that allows encapsulation of the non-native substrate proteins and provides a physical environment optimized to promote and accelerate protein folding. This Rhodospirillum rubrum (strain ATCC 11170 / ATH 1.1.1 / DSM 467 / LMG 4362 / NCIMB 8255 / S1) protein is Chaperonin GroEL 2.